The primary structure comprises 464 residues: Fumarate hydratase class II 1 (464 aa).

Residues 96–98 (SGT), 127–130 (HPND), 137–139 (SSN), and Thr-185 contribute to the substrate site. His-186 (proton donor/acceptor) is an active-site residue. Residue Ser-316 is part of the active site. Residues Ser-317 and 322–324 (KVN) each bind substrate.

It belongs to the class-II fumarase/aspartase family. Fumarase subfamily. Homotetramer.

It localises to the cytoplasm. The catalysed reaction is (S)-malate = fumarate + H2O. It functions in the pathway carbohydrate metabolism; tricarboxylic acid cycle; (S)-malate from fumarate: step 1/1. Involved in the TCA cycle. Catalyzes the stereospecific interconversion of fumarate to L-malate. In Pseudomonas aeruginosa (strain ATCC 15692 / DSM 22644 / CIP 104116 / JCM 14847 / LMG 12228 / 1C / PRS 101 / PAO1), this protein is Fumarate hydratase class II 1.